The following is a 281-amino-acid chain: Bifunctional protein FolD (281 aa).

Residues glycine 165 to glycine 167, threonine 192, and valine 233 contribute to the NADP(+) site.

The protein belongs to the tetrahydrofolate dehydrogenase/cyclohydrolase family. In terms of assembly, homodimer.

The catalysed reaction is (6R)-5,10-methylene-5,6,7,8-tetrahydrofolate + NADP(+) = (6R)-5,10-methenyltetrahydrofolate + NADPH. The enzyme catalyses (6R)-5,10-methenyltetrahydrofolate + H2O = (6R)-10-formyltetrahydrofolate + H(+). It participates in one-carbon metabolism; tetrahydrofolate interconversion. In terms of biological role, catalyzes the oxidation of 5,10-methylenetetrahydrofolate to 5,10-methenyltetrahydrofolate and then the hydrolysis of 5,10-methenyltetrahydrofolate to 10-formyltetrahydrofolate. The chain is Bifunctional protein FolD from Mycobacterium tuberculosis (strain ATCC 25177 / H37Ra).